The chain runs to 114 residues: Probable 4-amino-4-deoxy-L-arabinose-phosphoundecaprenol flippase subunit ArnE (114 aa).

2 consecutive transmembrane segments (helical) span residues 41–61 (GWLWLALFSLGLGLLVWLLVL) and 68–88 (VAYPMLSLNFVFITLIAHFVF). In terms of domain architecture, EamA spans 43 to 112 (LWLALFSLGL…VIGGVLLLSR (70 aa)).

The protein belongs to the ArnE family. As to quaternary structure, heterodimer of ArnE and ArnF.

It localises to the cell inner membrane. It participates in bacterial outer membrane biogenesis; lipopolysaccharide biosynthesis. Its function is as follows. Translocates 4-amino-4-deoxy-L-arabinose-phosphoundecaprenol (alpha-L-Ara4N-phosphoundecaprenol) from the cytoplasmic to the periplasmic side of the inner membrane. The protein is Probable 4-amino-4-deoxy-L-arabinose-phosphoundecaprenol flippase subunit ArnE of Pseudomonas fluorescens (strain ATCC BAA-477 / NRRL B-23932 / Pf-5).